We begin with the raw amino-acid sequence, 168 residues long: Mediator of RNA polymerase II transcription subunit 11 (168 aa).

The tract at residues 126-168 is disordered; the sequence is ETLENESNNEIQPKTESDTNQVETNENGNDINNKESEDIEMKE. Over residues 130-156 the composition is skewed to polar residues; the sequence is NESNNEIQPKTESDTNQVETNENGNDI. A compositionally biased stretch (basic and acidic residues) spans 157-168; it reads NNKESEDIEMKE.

Belongs to the Mediator complex subunit 11 family. Component of the Mediator complex.

It localises to the nucleus. Its function is as follows. Component of the Mediator complex, a coactivator involved in the regulated transcription of nearly all RNA polymerase II-dependent genes. Mediator functions as a bridge to convey information from gene-specific regulatory proteins to the basal RNA polymerase II transcription machinery. Mediator is recruited to promoters by direct interactions with regulatory proteins and serves as a scaffold for the assembly of a functional pre-initiation complex with RNA polymerase II and the general transcription factors. This chain is Mediator of RNA polymerase II transcription subunit 11 (MED11), found in Candida albicans (strain SC5314 / ATCC MYA-2876) (Yeast).